Here is a 359-residue protein sequence, read N- to C-terminus: MLSREEILEILSEYDLEDLSIATLGSHTALHILKGAKEEGLRSVVVCEEGRTTPYERLGVADEIIVVERFQDMLDEEVQERLRELNAIVVPHGSFVAYVGLDGIENEFCVPMFGNRRLLRWESERSLERKLLKRAGVKVPKVFDSPEDIDRPVIVKFPGARGGRGYFICSDPEEFEEKAERLIEDGVIDEEDLEQAHIEEYVVGTNFCVHYFRSVVEDTVEVLGMDRRYETNIDGLVRMPAGDQLEAGLEPSYVISGNIPVVVRESLLVQLYEMGDRVVRASEDIEEPGFIGPFCLQTLCTEDLEFYVFELSARIDGGTNVTFLPYAYLKFGEIVTMGRRIAKEVREARDKGLLEGVVT.

Positions 27 and 94 each coordinate 5-amino-1-(5-phospho-beta-D-ribosyl)imidazole-4-carboxamide. Positions 116–340 (RRLLRWESER…FGEIVTMGRR (225 aa)) constitute an ATP-grasp domain. ATP-binding positions include 146–208 (PEDI…TNFC) and glutamate 230. Residue asparagine 258 participates in 5-amino-1-(5-phospho-beta-D-ribosyl)imidazole-4-carboxamide binding. Positions 297 and 310 each coordinate Mg(2+).

This sequence belongs to the phosphohexose mutase family. Mg(2+) serves as cofactor. It depends on Mn(2+) as a cofactor.

The enzyme catalyses 5-amino-1-(5-phospho-beta-D-ribosyl)imidazole-4-carboxamide + formate + ATP = 5-formamido-1-(5-phospho-D-ribosyl)imidazole-4-carboxamide + ADP + phosphate. Its pathway is purine metabolism; IMP biosynthesis via de novo pathway; 5-formamido-1-(5-phospho-D-ribosyl)imidazole-4-carboxamide from 5-amino-1-(5-phospho-D-ribosyl)imidazole-4-carboxamide (formate route): step 1/1. Catalyzes the ATP- and formate-dependent formylation of 5-aminoimidazole-4-carboxamide-1-beta-d-ribofuranosyl 5'-monophosphate (AICAR) to 5-formaminoimidazole-4-carboxamide-1-beta-d-ribofuranosyl 5'-monophosphate (FAICAR) in the absence of folates. This chain is 5-formaminoimidazole-4-carboxamide-1-(beta)-D-ribofuranosyl 5'-monophosphate synthetase, found in Methanopyrus kandleri (strain AV19 / DSM 6324 / JCM 9639 / NBRC 100938).